The sequence spans 393 residues: Phosphoglycerate kinase (393 aa).

Substrate-binding positions include 22-24 (DFN), arginine 37, 60-63 (HLGR), arginine 119, and arginine 152. Residues lysine 202, glycine 293, glutamate 324, and 350–353 (GGDS) contribute to the ATP site.

It belongs to the phosphoglycerate kinase family. Monomer.

The protein resides in the cytoplasm. The enzyme catalyses (2R)-3-phosphoglycerate + ATP = (2R)-3-phospho-glyceroyl phosphate + ADP. Its pathway is carbohydrate degradation; glycolysis; pyruvate from D-glyceraldehyde 3-phosphate: step 2/5. This is Phosphoglycerate kinase from Borrelia garinii subsp. bavariensis (strain ATCC BAA-2496 / DSM 23469 / PBi) (Borreliella bavariensis).